The sequence spans 284 residues: MHELTGKDKLAFNKLQKRLRRQVGNAIVDYGMIRDGDKVMVCLSGGKDSYTMLDILMNLQRNAPVAFELVAVNLDQKQPGFPEHVLPEYLERVGVPYHIVERDTYSVVKEKTPEGKTTCALCSRLRRGTLYGFAEEIGANKVALGHHREDMLETLFLNMFFGGSLKSMPPKLLSDDGKHIVIRPLAYCREADIAEYAEWREFPIIPCNLCGSQPNLQRQVVKEMLTEWEEKHPGRLETMFKAITNVAPSQLADRAMFDFEGLEDKQRDFLARRIETFDVLAREA.

Positions 44 to 49 (SGGKDS) match the PP-loop motif motif. Cysteine 119, cysteine 122, and cysteine 210 together coordinate [4Fe-4S] cluster.

It belongs to the TtcA family. As to quaternary structure, homodimer. Mg(2+) serves as cofactor. It depends on [4Fe-4S] cluster as a cofactor.

It is found in the cytoplasm. The catalysed reaction is cytidine(32) in tRNA + S-sulfanyl-L-cysteinyl-[cysteine desulfurase] + AH2 + ATP = 2-thiocytidine(32) in tRNA + L-cysteinyl-[cysteine desulfurase] + A + AMP + diphosphate + H(+). The protein operates within tRNA modification. Functionally, catalyzes the ATP-dependent 2-thiolation of cytidine in position 32 of tRNA, to form 2-thiocytidine (s(2)C32). The sulfur atoms are provided by the cysteine/cysteine desulfurase (IscS) system. In Chromohalobacter salexigens (strain ATCC BAA-138 / DSM 3043 / CIP 106854 / NCIMB 13768 / 1H11), this protein is tRNA-cytidine(32) 2-sulfurtransferase.